The following is a 200-amino-acid chain: Small ribosomal subunit protein mS38 (200 aa).

It belongs to the mitochondrion-specific ribosomal protein mS38 family. Component of the mitochondrial ribosome small subunit (28S) which comprises a 12S rRNA and about 30 distinct proteins. Interacts with Aurora-A. In terms of tissue distribution, ubiquitously expressed and especially highly expressed in heart, skeletal muscle and testis.

The protein resides in the mitochondrion matrix. The protein localises to the nucleus. Its function is as follows. May act as a negative regulator of Aurora-A kinase, by down-regulation through proteasome-dependent degradation. The sequence is that of Small ribosomal subunit protein mS38 (Aurkaip1) from Mus musculus (Mouse).